The primary structure comprises 1107 residues: Integrator complex subunit 6 homolog (1107 aa).

Residues 2–195 (LITFVVDTSG…LPMEPAIAPM (194 aa)) form the VWFA domain. Disordered regions lie at residues 454–515 (RIIN…SGNL), 542–572 (DNET…SSNI), 629–801 (TLRD…VSSP), 818–861 (QISS…IVNN), and 946–1034 (VVRP…TTPN). 2 stretches are compositionally biased toward low complexity: residues 460–513 (QQQQ…SGSG) and 546–562 (SENS…STTG). Positions 629-639 (TLRDIDDDKKP) are enriched in basic and acidic residues. A compositionally biased stretch (low complexity) spans 693–801 (PSLPTLNSLS…PIPSTTVSSP (109 aa)). The segment covering 846–857 (SPPPPPPPPPLP) has biased composition (pro residues). Positions 956–975 (PLTIDTLTSSSSSSTIPTTT) are enriched in low complexity. The segment covering 976–996 (NGSLSTHDTPNTSPTLSSINY) has biased composition (polar residues). The segment covering 997 to 1034 (NNNNNNNNNNNNNNNNNNNNNNNNNNRKNSIITTTTPN) has biased composition (low complexity). The region spanning 1041 to 1103 (IKFVHKEIRR…SLISKLIGYI (63 aa)) is the MIF4G domain.

The protein belongs to the Integrator subunit 6 family. In terms of assembly, component of the Integrator complex. The core complex associates with protein phosphatase 2A subunits, to form the Integrator-PP2A (INTAC) complex.

It localises to the nucleus. Its subcellular location is the chromosome. Functionally, component of the integrator complex, a multiprotein complex that terminates RNA polymerase II (Pol II) transcription in the promoter-proximal region of genes. The integrator complex provides a quality checkpoint during transcription elongation by driving premature transcription termination of transcripts that are unfavorably configured for transcriptional elongation: the complex terminates transcription by (1) catalyzing dephosphorylation of the C-terminal domain (CTD) of Pol II subunit polr2a, (2) degrading the exiting nascent RNA transcript via endonuclease activity and (3) promoting the release of Pol II from bound DNA. The integrator complex is also involved in terminating the synthesis of non-coding Pol II transcripts, such as enhancer RNAs (eRNAs), small nuclear RNAs (snRNAs), telomerase RNAs and long non-coding RNAs (lncRNAs). Within the integrator complex, INTS6 acts as a molecular adapter that promotes assembly of protein phosphatase 2A (PP2A) subunits to the integrator core complex, promoting recruitment of PP2A to transcription pause-release checkpoint. In Dictyostelium discoideum (Social amoeba), this protein is Integrator complex subunit 6 homolog (ints6).